A 229-amino-acid chain; its full sequence is Potassium/proton antiporter CemA (229 aa).

The next 3 helical transmembrane spans lie at Phe7–Phe27, Leu114–Leu134, and Ile189–Ile209.

The protein belongs to the CemA family.

It is found in the plastid. The protein localises to the chloroplast inner membrane. It carries out the reaction K(+)(in) + H(+)(out) = K(+)(out) + H(+)(in). Functionally, contributes to K(+)/H(+) antiport activity by supporting proton efflux to control proton extrusion and homeostasis in chloroplasts in a light-dependent manner to modulate photosynthesis. Prevents excessive induction of non-photochemical quenching (NPQ) under continuous-light conditions. Indirectly promotes efficient inorganic carbon uptake into chloroplasts. The protein is Potassium/proton antiporter CemA of Ipomoea purpurea (Common morning glory).